Here is an 84-residue protein sequence, read N- to C-terminus: U8-theraphotoxin-Hhn1a (84 aa).

Residues 1–21 (MKVVLLECLVWMMAMMELVSC) form the signal peptide. 5 disulfides stabilise this stretch: cysteine 23/cysteine 35, cysteine 29/cysteine 44, cysteine 34/cysteine 67, cysteine 54/cysteine 75, and cysteine 69/cysteine 81.

The protein belongs to the AVIT (prokineticin) family. In terms of tissue distribution, expressed by the venom gland.

The protein resides in the secreted. The chain is U8-theraphotoxin-Hhn1a from Cyriopagopus hainanus (Chinese bird spider).